Consider the following 220-residue polypeptide: Putative F-box protein At3g20705 (220 aa).

Residues 1 to 51 enclose the F-box domain; sequence MMMMSNLPNDLVEEILSRVTVTFMRTVRSICKKWNALTKDRSFTNKYIRNI.

The protein is Putative F-box protein At3g20705 of Arabidopsis thaliana (Mouse-ear cress).